We begin with the raw amino-acid sequence, 506 residues long: Dolabradiene monooxygenase (506 aa).

A helical transmembrane segment spans residues Val5–Leu25. Cys443 serves as a coordination point for heme.

It belongs to the cytochrome P450 family. Heme is required as a cofactor.

It is found in the membrane. The catalysed reaction is dolabradiene + reduced [NADPH--hemoprotein reductase] + O2 = 15,16-epoxydolabrene + oxidized [NADPH--hemoprotein reductase] + H2O + H(+). The enzyme catalyses 15,16-epoxydolabrene + reduced [NADPH--hemoprotein reductase] + O2 = 3beta-hydroxy-15,16-epoxydolabrene + oxidized [NADPH--hemoprotein reductase] + H2O + H(+). Its function is as follows. Involved in the production of antifungal dolabralexin phytoalexins in response to biotic and abiotic stresses. Catalyzes the epoxidation of dolabradiene at C-16, followed by hydroxylation at C-3, to yield the epoxides 15,16-epoxydolabrene (epoxydolabrene) and 3b-hydroxy-15,16-epoxydolabrene (epoxydolabranol). This Zea mays (Maize) protein is Dolabradiene monooxygenase.